The primary structure comprises 565 residues: Proline--tRNA ligase (565 aa).

It belongs to the class-II aminoacyl-tRNA synthetase family. ProS type 1 subfamily. In terms of assembly, homodimer.

Its subcellular location is the cytoplasm. The catalysed reaction is tRNA(Pro) + L-proline + ATP = L-prolyl-tRNA(Pro) + AMP + diphosphate. Its function is as follows. Catalyzes the attachment of proline to tRNA(Pro) in a two-step reaction: proline is first activated by ATP to form Pro-AMP and then transferred to the acceptor end of tRNA(Pro). As ProRS can inadvertently accommodate and process non-cognate amino acids such as alanine and cysteine, to avoid such errors it has two additional distinct editing activities against alanine. One activity is designated as 'pretransfer' editing and involves the tRNA(Pro)-independent hydrolysis of activated Ala-AMP. The other activity is designated 'posttransfer' editing and involves deacylation of mischarged Ala-tRNA(Pro). The misacylated Cys-tRNA(Pro) is not edited by ProRS. In Francisella philomiragia subsp. philomiragia (strain ATCC 25017 / CCUG 19701 / FSC 153 / O#319-036), this protein is Proline--tRNA ligase.